The chain runs to 201 residues: MASGDDSPIFEDDESPPYSLEKMTDLVAVWEVALSDGVHKIEFEHGTTSGKRVVYVDGKEVIRKEWMFKLVGKETFCVGAAKTKATINIDAVSGFAYEYTLEINGKSLKKYMENRSKTTNTWVLHLDSEDFRVVLEKDTLDVWCNGKKMETAGEFVDDGTETHFNIGNHDCYIKAVSSGKRKEGIIHSLIVDNREIPEIVE.

It belongs to the FAIM1 family.

Its subcellular location is the cytoplasm. In terms of biological role, plays a role as an inducible effector molecule that mediates Fas resistance produced by surface Ig engagement in B cells. The protein is Fas apoptotic inhibitory molecule 1 (FAIM) of Bos taurus (Bovine).